A 278-amino-acid chain; its full sequence is Tryptophan synthase alpha chain (278 aa).

Catalysis depends on proton acceptor residues Glu-50 and Asp-61.

This sequence belongs to the TrpA family. As to quaternary structure, tetramer of two alpha and two beta chains.

The catalysed reaction is (1S,2R)-1-C-(indol-3-yl)glycerol 3-phosphate + L-serine = D-glyceraldehyde 3-phosphate + L-tryptophan + H2O. Its pathway is amino-acid biosynthesis; L-tryptophan biosynthesis; L-tryptophan from chorismate: step 5/5. Its function is as follows. The alpha subunit is responsible for the aldol cleavage of indoleglycerol phosphate to indole and glyceraldehyde 3-phosphate. This Afipia carboxidovorans (strain ATCC 49405 / DSM 1227 / KCTC 32145 / OM5) (Oligotropha carboxidovorans) protein is Tryptophan synthase alpha chain.